The primary structure comprises 156 residues: S-ribosylhomocysteine lyase (156 aa).

The Fe cation site is built by His-54, His-58, and Cys-123.

This sequence belongs to the LuxS family. Homodimer. Fe cation is required as a cofactor.

It carries out the reaction S-(5-deoxy-D-ribos-5-yl)-L-homocysteine = (S)-4,5-dihydroxypentane-2,3-dione + L-homocysteine. In terms of biological role, involved in the synthesis of autoinducer 2 (AI-2) which is secreted by bacteria and is used to communicate both the cell density and the metabolic potential of the environment. The regulation of gene expression in response to changes in cell density is called quorum sensing. Catalyzes the transformation of S-ribosylhomocysteine (RHC) to homocysteine (HC) and 4,5-dihydroxy-2,3-pentadione (DPD). This chain is S-ribosylhomocysteine lyase, found in Ligilactobacillus salivarius (strain UCC118) (Lactobacillus salivarius).